The following is a 293-amino-acid chain: ATP synthase gamma chain (293 aa).

Belongs to the ATPase gamma chain family. F-type ATPases have 2 components, CF(1) - the catalytic core - and CF(0) - the membrane proton channel. CF(1) has five subunits: alpha(3), beta(3), gamma(1), delta(1), epsilon(1). CF(0) has three main subunits: a, b and c.

The protein localises to the cell inner membrane. Produces ATP from ADP in the presence of a proton gradient across the membrane. The gamma chain is believed to be important in regulating ATPase activity and the flow of protons through the CF(0) complex. The polypeptide is ATP synthase gamma chain (Beijerinckia indica subsp. indica (strain ATCC 9039 / DSM 1715 / NCIMB 8712)).